The following is a 419-amino-acid chain: UDP-N-acetylglucosamine 1-carboxyvinyltransferase (419 aa).

22–23 (KN) contributes to the phosphoenolpyruvate binding site. Arg-92 contributes to the UDP-N-acetyl-alpha-D-glucosamine binding site. Catalysis depends on Cys-116, which acts as the Proton donor. 2-(S-cysteinyl)pyruvic acid O-phosphothioketal is present on Cys-116. UDP-N-acetyl-alpha-D-glucosamine is bound by residues 121-125 (RPIDQ), Asp-305, and Ile-327.

This sequence belongs to the EPSP synthase family. MurA subfamily.

Its subcellular location is the cytoplasm. It catalyses the reaction phosphoenolpyruvate + UDP-N-acetyl-alpha-D-glucosamine = UDP-N-acetyl-3-O-(1-carboxyvinyl)-alpha-D-glucosamine + phosphate. It functions in the pathway cell wall biogenesis; peptidoglycan biosynthesis. Cell wall formation. Adds enolpyruvyl to UDP-N-acetylglucosamine. This chain is UDP-N-acetylglucosamine 1-carboxyvinyltransferase, found in Trichlorobacter lovleyi (strain ATCC BAA-1151 / DSM 17278 / SZ) (Geobacter lovleyi).